We begin with the raw amino-acid sequence, 264 residues long: Thymidylate synthase (264 aa).

Residue Arg-21 coordinates dUMP. His-51 provides a ligand contact to (6R)-5,10-methylene-5,6,7,8-tetrahydrofolate. 126–127 (RR) contacts dUMP. Cys-146 functions as the Nucleophile in the catalytic mechanism. DUMP-binding positions include 166 to 169 (RSAD), Asn-177, and 207 to 209 (HLY). Position 169 (Asp-169) interacts with (6R)-5,10-methylene-5,6,7,8-tetrahydrofolate. Ser-263 contributes to the (6R)-5,10-methylene-5,6,7,8-tetrahydrofolate binding site.

Belongs to the thymidylate synthase family. Bacterial-type ThyA subfamily. As to quaternary structure, homodimer.

It localises to the cytoplasm. The enzyme catalyses dUMP + (6R)-5,10-methylene-5,6,7,8-tetrahydrofolate = 7,8-dihydrofolate + dTMP. The protein operates within pyrimidine metabolism; dTTP biosynthesis. Functionally, catalyzes the reductive methylation of 2'-deoxyuridine-5'-monophosphate (dUMP) to 2'-deoxythymidine-5'-monophosphate (dTMP) while utilizing 5,10-methylenetetrahydrofolate (mTHF) as the methyl donor and reductant in the reaction, yielding dihydrofolate (DHF) as a by-product. This enzymatic reaction provides an intracellular de novo source of dTMP, an essential precursor for DNA biosynthesis. The polypeptide is Thymidylate synthase (Neisseria meningitidis serogroup B (strain ATCC BAA-335 / MC58)).